The primary structure comprises 69 residues: Atypical cationic antimicrobial peptide (69 aa).

Positions 1-22 (MAFLKKSLFLVLFLGLVSLSIC) are cleaved as a signal peptide. The propeptide occupies 23 to 45 (DEEKRENEDEENQEDDEQSEMRR). Residues 25–45 (EKRENEDEENQEDDEQSEMRR) are disordered. Over residues 30–40 (EDEENQEDDEQ) the composition is skewed to acidic residues.

This sequence belongs to the frog skin active peptide (FSAP) family. As to quaternary structure, monomer and/or weakly self-associated, oligomer, and amyloid-like fibril. Can adopt a monomeric nonamphipathic alpha-helical conformation, possibly with the aid of its cationic N- and C-termini, when bound to anionic membranes. Forms stable and ordered beta-sheet aggregates in aqueous environment or when bound to anionic or zwitterionic phospholipid vesicles. Expressed by the skin glands.

The protein localises to the secreted. It is found in the target cell membrane. Functionally, atypical cationic antimicrobial peptide with potent activity against Gram-negative and Gram-positive bacteria. Acts by inducing permeabilization of bacterial membrane. In vitro, also shows chemoattractant activity, which is mediated through a G protein-coupled receptor (probably FPR2 coupled to the ERK1/2 MAPK kinase pathway). Has slow-kinetic self-association and amyloid-like properties that modulate its activity. The soluble, weakly self-associated forms act on leukocytes to promote chemotaxis but have low antibacterial activity, the oligomers exhibit potent antimicrobial activity, whereas the amyloid-like fibrils have a very weak antibacterial activity. The membrane composition has a great influence on the peptide behavior. The peptide induces membrane leakage and insertion to a lesser extent in model membranes of the anionic lipid phosphatidylglycerol (PG) than in the model membranes of the zwitterionic lipid phosphatidylcholine (PC) vesicles. It forms more fibrils in PC than in PG. Membrane perturbations are more observed in the presence of PG than in the presence of PC. The peptide shows low hemolytic activity. This chain is Atypical cationic antimicrobial peptide, found in Phyllomedusa sauvagei (Sauvage's leaf frog).